The chain runs to 305 residues: FMRFamide-related peptides type HF-4 (305 aa).

The signal sequence occupies residues 1–19 (MTSLCLTIAPAVLSLICLS). Phenylalanine amide is present on residues phenylalanine 36, phenylalanine 47, and phenylalanine 66. The residue at position 75 (isoleucine 75) is an Isoleucine amide. 2 positions are modified to phenylalanine amide: phenylalanine 84 and phenylalanine 93. Isoleucine 102 is modified (isoleucine amide). 7 positions are modified to phenylalanine amide: phenylalanine 111, phenylalanine 120, phenylalanine 129, phenylalanine 138, phenylalanine 147, phenylalanine 156, and phenylalanine 165. The propeptide occupies 168 to 305 (SVDGEIEAGV…EHKQEYMRFG (138 aa)).

The protein belongs to the FARP (FMRFamide related peptide) family. As to expression, central nervous system.

Its subcellular location is the secreted. Its function is as follows. Can function as both cardioregulatory hormones and transmitters and may regulate cardiovascular function. The chain is FMRFamide-related peptides type HF-4 from Cornu aspersum (Brown garden snail).